Consider the following 418-residue polypeptide: Beta-arrestin-1 (418 aa).

The interval 1–163 (MGDKGTRVFK…LEEKIHKRNS (163 aa)) is interaction with SRC. Residues 45-86 (PEYLKERRVYVTLTCAFRYGREDLDVLGLTFRKDLFVANVQS) are interaction with CHRM2. Tyr-47 bears the Phosphotyrosine mark. 1D-myo-inositol hexakisphosphate-binding residues include Lys-250, Met-255, Lys-324, and Lys-326. The tract at residues 318 to 418 (IVSYKVKVKL…GTGSPHLNNR (101 aa)) is interaction with TRAF6. 2 disordered regions span residues 353–375 (HPKP…VDTN) and 397–418 (KGMK…LNNR). The segment covering 355-366 (KPKEEPPHREVP) has biased composition (basic and acidic residues). At Ser-412 the chain carries Phosphoserine.

It belongs to the arrestin family. In terms of assembly, monomer. Homodimer. Homooligomer; the self-association is mediated by InsP6-binding. Heterooligomer with ARRB2; the association is mediated by InsP6-binding. Interacts with ADRB2 (phosphorylated). Interacts with CHRM2 (phosphorylated). Interacts with LHCGR. Interacts with CYTH2 and CASR. Interacts with AP2B1 (dephosphorylated); phosphorylation of AP2B1 disrupts the interaction. Interacts (dephosphorylated at Ser-412) with CLTC. Interacts with CCR2 and GRK2. Interacts with CRR5. Interacts with PTAFR (phosphorylated on serine residues). Interacts with CLTC and MAP2K3. Interacts with CREB1. Interacts with TRAF6. Interacts with IGF1R and MDM2. Interacts with C5AR1. Interacts with PDE4D. Interacts with SRC (via the SH3 domain and the protein kinase domain); the interaction is independent of the phosphorylation state of SRC C-terminus. Interacts with TACR1. Interacts with RAF1. Interacts with DVL1; the interaction is enhanced by phosphorylation of DVL1. Interacts with DVL2; the interaction is enhanced by phosphorylation of DVL2. Interacts with IGF1R. Interacts with CHUK, IKBKB and MAP3K14. Associates with MAP kinase p38. Part of a MAPK signaling complex consisting of TACR1, ARRB1, SRC, MAPK1 (activated) and MAPK3 (activated). Part of a MAPK signaling complex consisting of F2RL1, ARRB1, RAF1, MAPK1 (activated) and MAPK3 (activated). Interacts with GPR143. Interacts with MAP2K4/MKK4. Interacts with HCK and CXCR1 (phosphorylated). Interacts with ACKR3 and ACKR4. Interacts with ARRDC1; the interaction is direct. Interacts with GPR61, GPR62 and GPR135. In terms of processing, constitutively phosphorylated at in the cytoplasm. At the plasma membrane, is rapidly dephosphorylated, a process that is required for clathrin binding and ADRB2 endocytosis but not for ADRB2 binding and desensitization. Once internalized, is rephosphorylated. Post-translationally, the ubiquitination status appears to regulate the formation and trafficking of beta-arrestin-GPCR complexes and signaling. Ubiquitination appears to occur GPCR-specific. Ubiquitinated by MDM2; the ubiquitination is required for rapid internalization of ADRB2. Deubiquitinated by USP33; the deubiquitination leads to a dissociation of the beta-arrestin-GPCR complex. Stimulation of a class A GPCR, such as ADRB2, induces transient ubiquitination and subsequently promotes association with USP33.

It localises to the cytoplasm. Its subcellular location is the nucleus. It is found in the cell membrane. The protein resides in the membrane. The protein localises to the clathrin-coated pit. It localises to the cell projection. Its subcellular location is the pseudopodium. It is found in the cytoplasmic vesicle. Functionally, functions in regulating agonist-mediated G-protein coupled receptor (GPCR) signaling by mediating both receptor desensitization and resensitization processes. During homologous desensitization, beta-arrestins bind to the GPRK-phosphorylated receptor and sterically preclude its coupling to the cognate G-protein; the binding appears to require additional receptor determinants exposed only in the active receptor conformation. The beta-arrestins target many receptors for internalization by acting as endocytic adapters (CLASPs, clathrin-associated sorting proteins) and recruiting the GPRCs to the adapter protein 2 complex 2 (AP-2) in clathrin-coated pits (CCPs). However, the extent of beta-arrestin involvement appears to vary significantly depending on the receptor, agonist and cell type. Internalized arrestin-receptor complexes traffic to intracellular endosomes, where they remain uncoupled from G-proteins. Two different modes of arrestin-mediated internalization occur. Class A receptors, like ADRB2, OPRM1, ENDRA, D1AR and ADRA1B dissociate from beta-arrestin at or near the plasma membrane and undergo rapid recycling. Class B receptors, like AVPR2, AGTR1, NTSR1, TRHR and TACR1 internalize as a complex with arrestin and traffic with it to endosomal vesicles, presumably as desensitized receptors, for extended periods of time. Receptor resensitization then requires that receptor-bound arrestin is removed so that the receptor can be dephosphorylated and returned to the plasma membrane. Involved in internalization of P2RY4 and UTP-stimulated internalization of P2RY2. Involved in phosphorylation-dependent internalization of OPRD1 ands subsequent recycling. Involved in the degradation of cAMP by recruiting cAMP phosphodiesterases to ligand-activated receptors. Beta-arrestins function as multivalent adapter proteins that can switch the GPCR from a G-protein signaling mode that transmits short-lived signals from the plasma membrane via small molecule second messengers and ion channels to a beta-arrestin signaling mode that transmits a distinct set of signals that are initiated as the receptor internalizes and transits the intracellular compartment. Acts as a signaling scaffold for MAPK pathways such as MAPK1/3 (ERK1/2). ERK1/2 activated by the beta-arrestin scaffold is largely excluded from the nucleus and confined to cytoplasmic locations such as endocytic vesicles, also called beta-arrestin signalosomes. Recruits c-Src/SRC to ADRB2 resulting in ERK activation. GPCRs for which the beta-arrestin-mediated signaling relies on both ARRB1 and ARRB2 (codependent regulation) include ADRB2, F2RL1 and PTH1R. For some GPCRs the beta-arrestin-mediated signaling relies on either ARRB1 or ARRB2 and is inhibited by the other respective beta-arrestin form (reciprocal regulation). Inhibits ERK1/2 signaling in AGTR1- and AVPR2-mediated activation (reciprocal regulation). Is required for SP-stimulated endocytosis of NK1R and recruits c-Src/SRC to internalized NK1R resulting in ERK1/2 activation, which is required for the antiapoptotic effects of SP. Is involved in proteinase-activated F2RL1-mediated ERK activity. Acts as a signaling scaffold for the AKT1 pathway. Is involved in alpha-thrombin-stimulated AKT1 signaling. Is involved in IGF1-stimulated AKT1 signaling leading to increased protection from apoptosis. Involved in activation of the p38 MAPK signaling pathway and in actin bundle formation. Involved in F2RL1-mediated cytoskeletal rearrangement and chemotaxis. Involved in AGTR1-mediated stress fiber formation by acting together with GNAQ to activate RHOA. Appears to function as signaling scaffold involved in regulation of MIP-1-beta-stimulated CCR5-dependent chemotaxis. Involved in attenuation of NF-kappa-B-dependent transcription in response to GPCR or cytokine stimulation by interacting with and stabilizing CHUK. May serve as nuclear messenger for GPCRs. Involved in OPRD1-stimulated transcriptional regulation by translocating to CDKN1B and FOS promoter regions and recruiting EP300 resulting in acetylation of histone H4. Involved in regulation of LEF1 transcriptional activity via interaction with DVL1 and/or DVL2 Also involved in regulation of receptors other than GPCRs. Involved in Toll-like receptor and IL-1 receptor signaling through the interaction with TRAF6 which prevents TRAF6 autoubiquitination and oligomerization required for activation of NF-kappa-B and JUN. Involved in IL8-mediated granule release in neutrophils. Binds phosphoinositides. Binds inositolhexakisphosphate (InsP6). Required for atypical chemokine receptor ACKR2-induced RAC1-LIMK1-PAK1-dependent phosphorylation of cofilin (CFL1) and for the up-regulation of ACKR2 from endosomal compartment to cell membrane, increasing its efficiency in chemokine uptake and degradation. Involved in the internalization of the atypical chemokine receptor ACKR3. Negatively regulates the NOTCH signaling pathway by mediating the ubiquitination and degradation of NOTCH1 by ITCH. Participates in the recruitment of the ubiquitin-protein ligase to the receptor. The chain is Beta-arrestin-1 (Arrb1) from Mus musculus (Mouse).